The primary structure comprises 1414 residues: Protein KATNIP homolog (1414 aa).

7 disordered regions span residues 1–32, 80–116, 139–158, 712–731, 756–783, 823–861, and 924–943; these read MHGK…DEKH, QQST…PGKI, GPNT…NEDQ, VSAT…NDLT, SSSS…TFTN, KMDN…SEKY, and QQQK…SLMP. 2 stretches are compositionally biased toward basic and acidic residues: residues 10 to 32 and 86 to 101; these read RKND…DEKH and LARE…DDGC. Residues 147-158 show a composition bias toward acidic residues; the sequence is DFESDDDMNEDQ. Composition is skewed to polar residues over residues 832–843 and 924–940; these read NFSNQSSYNSDR and QQQK…NGSS.

It is found in the cytoplasm. The protein resides in the cytoskeleton. Its subcellular location is the cilium axoneme. It localises to the cilium basal body. In terms of biological role, may control cilium integrity. This Xenopus laevis (African clawed frog) protein is Protein KATNIP homolog.